The sequence spans 1072 residues: PWWP domain-containing protein 1 (1072 aa).

The segment at Asp21–Leu133 is disordered. Over residues Asp25–Ser38 the composition is skewed to low complexity. A compositionally biased stretch (basic and acidic residues) spans Arg66–Gly77. A compositionally biased stretch (acidic residues) spans Lys96 to Glu128. In terms of domain architecture, PWWP spans Val173–Asn234. The interval Lys365–Ser387 is disordered. Residues Ser366–Glu375 are compositionally biased toward polar residues. The Nuclear localization signal 1 motif lies at Ser402–Lys409. Disordered stretches follow at residues Ala486–Gly619, Leu681–Gln738, Lys871–Arg931, and Glu944–Val973. A compositionally biased stretch (basic and acidic residues) spans Ser498–Ser526. Polar residues predominate over residues Ala545 to Ser568. 3 consecutive short sequence motifs (nuclear localization signal) follow at residues Lys596–Asp603, Val705–Ser712, and Leu733–Lys740. The span at Lys706–Ser729 shows a compositional bias: basic and acidic residues. Basic and acidic residues predominate over residues Lys871–Thr880. The segment covering Leu897 to Asn906 has biased composition (pro residues). Residues Ser921–Asn930 show a composition bias toward low complexity. A compositionally biased stretch (polar residues) spans Ser947–Pro966.

This sequence belongs to the PDP family. Interacts with MSI4/FVE. Component of the PRC2 (polycomb repressive complex 2) complex which regulates histone methylation on histone H3K27.

It localises to the nucleus. Functionally, together with PDP2, PDP3 and PDP6, interacts with MSI4/FVE and MSI5 to suppress FLC, MAF4 and MAF5 expression by regulating the function of the PRC2 complex and modulating H3K27me3 level, thereby promoting flowering. The sequence is that of PWWP domain-containing protein 1 from Arabidopsis thaliana (Mouse-ear cress).